A 403-amino-acid polypeptide reads, in one-letter code: CCA-adding enzyme (403 aa).

Gly32 and Arg35 together coordinate ATP. CTP is bound by residues Gly32 and Arg35. Mg(2+)-binding residues include Asp45 and Asp47. The ATP site is built by Arg116, Asp159, Arg162, Arg165, and Arg168. Positions 116, 159, 162, 165, and 168 each coordinate CTP.

The protein belongs to the tRNA nucleotidyltransferase/poly(A) polymerase family. Bacterial CCA-adding enzyme type 3 subfamily. In terms of assembly, homodimer. Mg(2+) serves as cofactor.

The enzyme catalyses a tRNA precursor + 2 CTP + ATP = a tRNA with a 3' CCA end + 3 diphosphate. The catalysed reaction is a tRNA with a 3' CCA end + 2 CTP + ATP = a tRNA with a 3' CCACCA end + 3 diphosphate. Functionally, catalyzes the addition and repair of the essential 3'-terminal CCA sequence in tRNAs without using a nucleic acid template. Adds these three nucleotides in the order of C, C, and A to the tRNA nucleotide-73, using CTP and ATP as substrates and producing inorganic pyrophosphate. tRNA 3'-terminal CCA addition is required both for tRNA processing and repair. Also involved in tRNA surveillance by mediating tandem CCA addition to generate a CCACCA at the 3' terminus of unstable tRNAs. While stable tRNAs receive only 3'-terminal CCA, unstable tRNAs are marked with CCACCA and rapidly degraded. This chain is CCA-adding enzyme, found in Streptococcus uberis (strain ATCC BAA-854 / 0140J).